Here is a 443-residue protein sequence, read N- to C-terminus: FAD-dependent monooxygenase orf3 (443 aa).

Residues 5–25 (SIEVAIIGAGITGITLALGLL) form a helical membrane-spanning segment. FAD is bound by residues glutamate 35 and glycine 48. Residues asparagine 75 and asparagine 87 are each glycosylated (N-linked (GlcNAc...) asparagine). Arginine 116 contacts FAD. Residue arginine 199 is part of the active site. Positions 315 and 328 each coordinate FAD.

It belongs to the paxM FAD-dependent monooxygenase family. The cofactor is FAD.

It localises to the membrane. The protein operates within secondary metabolite biosynthesis. Functionally, FAD-dependent monooxygenase; part of the gene cluster that mediates the biosynthesis of nigerpyrone and its derivatives carbonarone A and pestalamide A. The biosynthesis pathway begins with the polyketide assembly by epaA to form phenylacetyl triketide precursor from successive condensation of two malonyl-CoA, presumably with one phenylacetyl-CoA starter unit produced by the phenylacetyl-CoA ligase epaB. For the nigerpyrone biosynthesis, the reactive polyketide chain is released as an aldehyde through the R-domain. A nonenzymatic cyclization and dehydration may create nigerpyrone. For the biosynthesis of carbonarone A and pestalamide A, an extra methyl group is added through the C-methyltransferase domain. Several further steps involving the dehydrogenase orf1, the cytochrome P450 monooxygenase orf2 and the FAD-dependent monooxygenase orf3 are required to form a carbonarone A precursor which is converted to carbonarone A via cyclization. The O-acetyltransferase epaC could catalyze the transfer of 2-methylsuccinyl-CoA, a common intermediate in the ethylmalonyl-CoA pathway, to generate the final product pestalamide A. The chain is FAD-dependent monooxygenase orf3 from Aspergillus niger (strain ATCC MYA-4892 / CBS 513.88 / FGSC A1513).